We begin with the raw amino-acid sequence, 421 residues long: uncharacterized protein (421 aa).

Coiled coils occupy residues 126 to 182 (YART…IQKI) and 328 to 397 (YQVE…RLTL).

This is an uncharacterized protein from Treponema pallidum (strain Nichols).